The following is a 370-amino-acid chain: Aminomethyltransferase (370 aa).

It belongs to the GcvT family. As to quaternary structure, the glycine cleavage system is composed of four proteins: P, T, L and H.

It catalyses the reaction N(6)-[(R)-S(8)-aminomethyldihydrolipoyl]-L-lysyl-[protein] + (6S)-5,6,7,8-tetrahydrofolate = N(6)-[(R)-dihydrolipoyl]-L-lysyl-[protein] + (6R)-5,10-methylene-5,6,7,8-tetrahydrofolate + NH4(+). Functionally, the glycine cleavage system catalyzes the degradation of glycine. The protein is Aminomethyltransferase of Prochlorococcus marinus (strain MIT 9215).